Consider the following 198-residue polypeptide: Probable chemoreceptor glutamine deamidase CheD (198 aa).

The protein belongs to the CheD family.

It catalyses the reaction L-glutaminyl-[protein] + H2O = L-glutamyl-[protein] + NH4(+). Probably deamidates glutamine residues to glutamate on methyl-accepting chemotaxis receptors (MCPs), playing an important role in chemotaxis. In Xanthomonas euvesicatoria pv. vesicatoria (strain 85-10) (Xanthomonas campestris pv. vesicatoria), this protein is Probable chemoreceptor glutamine deamidase CheD.